The following is a 272-amino-acid chain: Soluble interferon gamma receptor OPG193 (272 aa).

The first 13 residues, 1-13, serve as a signal peptide directing secretion; it reads MRYIIILAVLFIN. 3 N-linked (GlcNAc...) asparagine; by host glycosylation sites follow: N42, N150, and N267.

Belongs to the type II cytokine receptor family. In terms of assembly, homodimer. Interacts with host IFNG.

The protein resides in the secreted. Counteracts the antiviral effects of host IFN-gamma. Acts as a soluble IFN-gamma receptor and thus inhibits the interaction between host IFN-gamma and its receptor. This is Soluble interferon gamma receptor OPG193 (OPG193) from Homo sapiens (Human).